We begin with the raw amino-acid sequence, 669 residues long: Protein real-time (669 aa).

Residues Gln-3–Val-175 enclose the PRELI/MSF1 domain. The CRAL-TRIO domain maps to Glu-284 to Ile-460. One can recognise a GOLD domain in the interval His-522 to Ser-641.

The protein localises to the mitochondrion. The sequence is that of Protein real-time from Drosophila pseudoobscura pseudoobscura (Fruit fly).